We begin with the raw amino-acid sequence, 125 residues long: UPF0102 protein Rpic_3463 (125 aa).

The protein belongs to the UPF0102 family.

The protein is UPF0102 protein Rpic_3463 of Ralstonia pickettii (strain 12J).